A 248-amino-acid chain; its full sequence is 2,3-bisphosphoglycerate-dependent phosphoglycerate mutase (248 aa).

Substrate-binding positions include 8–15, 21–22, arginine 60, 87–90, lysine 98, 114–115, and 183–184; these read RHGESQWN, TG, ERHY, RR, and GN. Residue histidine 9 is the Tele-phosphohistidine intermediate of the active site. The active-site Proton donor/acceptor is the glutamate 87.

This sequence belongs to the phosphoglycerate mutase family. BPG-dependent PGAM subfamily. As to quaternary structure, homodimer.

It carries out the reaction (2R)-2-phosphoglycerate = (2R)-3-phosphoglycerate. It functions in the pathway carbohydrate degradation; glycolysis; pyruvate from D-glyceraldehyde 3-phosphate: step 3/5. Catalyzes the interconversion of 2-phosphoglycerate and 3-phosphoglycerate. The sequence is that of 2,3-bisphosphoglycerate-dependent phosphoglycerate mutase from Alteromonas mediterranea (strain DSM 17117 / CIP 110805 / LMG 28347 / Deep ecotype).